The chain runs to 226 residues: 2-C-methyl-D-erythritol 4-phosphate cytidylyltransferase (226 aa).

Belongs to the IspD/TarI cytidylyltransferase family. IspD subfamily.

It carries out the reaction 2-C-methyl-D-erythritol 4-phosphate + CTP + H(+) = 4-CDP-2-C-methyl-D-erythritol + diphosphate. Its pathway is isoprenoid biosynthesis; isopentenyl diphosphate biosynthesis via DXP pathway; isopentenyl diphosphate from 1-deoxy-D-xylulose 5-phosphate: step 2/6. In terms of biological role, catalyzes the formation of 4-diphosphocytidyl-2-C-methyl-D-erythritol from CTP and 2-C-methyl-D-erythritol 4-phosphate (MEP). This is 2-C-methyl-D-erythritol 4-phosphate cytidylyltransferase from Bacillus cereus (strain ATCC 10987 / NRS 248).